We begin with the raw amino-acid sequence, 293 residues long: Probable rRNA-processing protein EBP2 homolog (293 aa).

The segment covering 1-37 (MSLEEDIVSDDEMNMIDEDDATDSEAESLSDSDTENE) has biased composition (acidic residues). 2 disordered regions span residues 1–45 (MSLE…LAEP) and 150–293 (IEES…RQKR). The stretch at 135 to 190 (HMEKVKSRLLHEKKQIEESEERRKARDNKRMAKEVQSQKMKERAKEKKDNIESVKK) forms a coiled coil. Basic and acidic residues-rich tracts occupy residues 150 to 167 (IEES…RMAK), 173 to 189 (KMKE…ESVK), and 247 to 256 (KKREFRDSKF). The span at 265–275 (SKQNTAETTND) shows a compositional bias: polar residues.

This sequence belongs to the EBP2 family. As to quaternary structure, interacts with NSN1.

Its subcellular location is the nucleus. The protein resides in the nucleolus. Functionally, required for the processing of the 27S pre-rRNA. Plays an important role in plant growth and senescence by modulating ribosome biogenesis in nucleolus. Associates with ribosomes. This Arabidopsis thaliana (Mouse-ear cress) protein is Probable rRNA-processing protein EBP2 homolog.